A 326-amino-acid chain; its full sequence is Eukaryotic translation initiation factor 2 subunit 1 (326 aa).

Residues 24-95 (DDLIMVKVNR…QKGYIDLSKR (72 aa)) form the S1 motif domain. At Ser59 the chain carries Phosphoserine; by eIK1, eIK2 and PK4. Positions 291 to 326 (LDKHDGLSSDDEYSSDGDEDDSSNDDDNSSDEDDDD) are disordered. Residues 298–326 (SSDDEYSSDGDEDDSSNDDDNSSDEDDDD) are compositionally biased toward acidic residues.

Belongs to the eIF-2-alpha family. Post-translationally, phosphorylates at Ser-59 in mature trophozoites, schizonts and gametocytes but not in rings and young trophozoites. Phosphorylates at Ser-59 by eIK2 in salivary gland sporozoites but not in midgut and hemocoel sporozoites. Dephosphorylated at Ser-59 by UIS2. Phosphorylation of eIF2alpha subunit of the pre-initiation complex eIF2 inhibits recycling of inactive eIF2-GDP to active eIF2-GTP by limiting the activity of the guanine nucleotide exchange factor eIF2B and thus, inhibits protein translation.

It is found in the cytoplasm. Its subcellular location is the stress granule. In terms of biological role, functions in the early steps of protein synthesis by forming a ternary complex with GTP and initiator tRNA. May regulate protein translation in response to amino acid starvation. May regulate protein at various stages of parasite development. The chain is Eukaryotic translation initiation factor 2 subunit 1 from Plasmodium berghei (strain Anka).